The sequence spans 300 residues: Ribosomal RNA small subunit methyltransferase H (300 aa).

Residues 46 to 48 (GGH), Asp65, Phe92, Asp107, and Gln114 each bind S-adenosyl-L-methionine.

The protein belongs to the methyltransferase superfamily. RsmH family.

The protein localises to the cytoplasm. The enzyme catalyses cytidine(1402) in 16S rRNA + S-adenosyl-L-methionine = N(4)-methylcytidine(1402) in 16S rRNA + S-adenosyl-L-homocysteine + H(+). Specifically methylates the N4 position of cytidine in position 1402 (C1402) of 16S rRNA. In Prochlorococcus marinus (strain MIT 9215), this protein is Ribosomal RNA small subunit methyltransferase H.